We begin with the raw amino-acid sequence, 201 residues long: Recombination protein RecR (201 aa).

The C4-type zinc finger occupies 57–72 (CADCRTFTEQEVCNIC). The Toprim domain maps to 81–176 (GQICVVESPA…EASRIAHGVP (96 aa)).

It belongs to the RecR family.

Its function is as follows. May play a role in DNA repair. It seems to be involved in an RecBC-independent recombinational process of DNA repair. It may act with RecF and RecO. In Escherichia coli O17:K52:H18 (strain UMN026 / ExPEC), this protein is Recombination protein RecR.